The following is a 298-amino-acid chain: Probable endonuclease 4 (298 aa).

Residues H69, H111, E146, D180, H183, H215, D228, H230, and E260 each coordinate Zn(2+).

This sequence belongs to the AP endonuclease 2 family. Zn(2+) serves as cofactor.

It catalyses the reaction Endonucleolytic cleavage to 5'-phosphooligonucleotide end-products.. In terms of biological role, endonuclease IV plays a role in DNA repair. It cleaves phosphodiester bonds at apurinic or apyrimidinic (AP) sites, generating a 3'-hydroxyl group and a 5'-terminal sugar phosphate. The chain is Probable endonuclease 4 from Bacillus anthracis (strain A0248).